The sequence spans 96 residues: Phosphoribosyl-ATP pyrophosphatase (96 aa).

It belongs to the PRA-PH family.

The protein resides in the cytoplasm. The enzyme catalyses 1-(5-phospho-beta-D-ribosyl)-ATP + H2O = 1-(5-phospho-beta-D-ribosyl)-5'-AMP + diphosphate + H(+). It participates in amino-acid biosynthesis; L-histidine biosynthesis; L-histidine from 5-phospho-alpha-D-ribose 1-diphosphate: step 2/9. The protein is Phosphoribosyl-ATP pyrophosphatase of Methanococcus maripaludis (strain DSM 14266 / JCM 13030 / NBRC 101832 / S2 / LL).